The primary structure comprises 555 residues: Phosphomethylpyrimidine synthase (555 aa).

Residues N191, M220, Y249, H285, 305 to 307, 346 to 349, and E385 each bind substrate; these read SRG and DGLR. Zn(2+) is bound at residue H389. Y412 provides a ligand contact to substrate. H453 provides a ligand contact to Zn(2+). C533, C536, and C541 together coordinate [4Fe-4S] cluster.

This sequence belongs to the ThiC family. As to quaternary structure, homodimer. [4Fe-4S] cluster serves as cofactor.

The enzyme catalyses 5-amino-1-(5-phospho-beta-D-ribosyl)imidazole + S-adenosyl-L-methionine = 4-amino-2-methyl-5-(phosphooxymethyl)pyrimidine + CO + 5'-deoxyadenosine + formate + L-methionine + 3 H(+). It functions in the pathway cofactor biosynthesis; thiamine diphosphate biosynthesis. Catalyzes the synthesis of the hydroxymethylpyrimidine phosphate (HMP-P) moiety of thiamine from aminoimidazole ribotide (AIR) in a radical S-adenosyl-L-methionine (SAM)-dependent reaction. The polypeptide is Phosphomethylpyrimidine synthase (Ehrlichia ruminantium (strain Welgevonden)).